A 376-amino-acid polypeptide reads, in one-letter code: C-type lectin domain family 4 member M (376 aa).

Over 1–49 the chain is Cytoplasmic; it reads MSDSKEPRVQQLGLLEEDPTTSGIRLFPRDFQFQQIHGHKSSTGCLGHG. The short motif at 14–15 is the Endocytosis signal element; sequence LL. A helical; Signal-anchor for type II membrane protein transmembrane segment spans residues 50-70; that stretch reads ALVLQLLSFTLLAGVLVAILV. The Extracellular segment spans residues 71-376; the sequence is QVSKVPSSLS…KKPTVCFRDE (306 aa). N-linked (GlcNAc...) asparagine glycosylation is present at Asn-92. A run of 6 repeats spans residues 108 to 130, 131 to 153, 154 to 176, 177 to 199, 200 to 222, and 223 to 245. Residues 108-246 are 6 X approximate tandem repeats; that stretch reads KLQEIYQELT…AFERLCRHCP (139 aa). Cystine bridges form between Cys-242/Cys-372, Cys-245/Cys-256, Cys-273/Cys-366, and Cys-345/Cys-358. Positions 251 to 367 constitute a C-type lectin domain; that stretch reads FFQGNCYFMS…CDVDNYWICK (117 aa). The Ca(2+) site is built by Glu-336, Asn-338, Ser-340, Glu-343, Asn-354, and Asp-355. The N-linked (GlcNAc...) asparagine glycan is linked to Asn-338.

Homotetramer.

Its subcellular location is the membrane. Its function is as follows. Probable pathogen-recognition receptor involved in peripheral immune surveillance in liver. May mediate the endocytosis of pathogens which are subsequently degraded in lysosomal compartments. Probably recognizes in a calcium-dependent manner high mannose N-linked oligosaccharides in a variety of pathogen antigens. Is a receptor for ICAM3, probably by binding to mannose-like carbohydrates. This Gorilla gorilla gorilla (Western lowland gorilla) protein is C-type lectin domain family 4 member M (CLEC4M).